A 217-amino-acid polypeptide reads, in one-letter code: Adenylate kinase (217 aa).

10 to 15 (GAGKGT) contacts ATP. An NMP region spans residues 30-59 (STGEILRAAVKSKTPMGVKAKEYMDQGALV). AMP-binding positions include Thr31, Arg36, 57 to 59 (ALV), 85 to 88 (GFPR), and Gln92. Positions 126–163 (GRRVCRACGRAFHVKFDPPLVDGVCDACGGELYQRDDD) are LID. Arg127 contacts ATP. Residues Cys130, Cys133, Cys150, and Cys153 each coordinate Zn(2+). 2 residues coordinate AMP: Arg160 and Arg171. Glu199 contributes to the ATP binding site.

Belongs to the adenylate kinase family. In terms of assembly, monomer.

It localises to the cytoplasm. It carries out the reaction AMP + ATP = 2 ADP. It functions in the pathway purine metabolism; AMP biosynthesis via salvage pathway; AMP from ADP: step 1/1. In terms of biological role, catalyzes the reversible transfer of the terminal phosphate group between ATP and AMP. Plays an important role in cellular energy homeostasis and in adenine nucleotide metabolism. The chain is Adenylate kinase from Geobacter sulfurreducens (strain ATCC 51573 / DSM 12127 / PCA).